The chain runs to 458 residues: Ammonium transporter Rh type B (458 aa).

Residues 1–13 are Cytoplasmic-facing; sequence MAGSPSRAAGRRL. A helical transmembrane segment spans residues 14 to 34; sequence QLPLLCLFLQGATAVLFAVFV. The Extracellular segment spans residues 35–61; it reads RYNHKTDAALWHRSNHSNADNEFYFRY. N-linked (GlcNAc...) asparagine glycosylation occurs at asparagine 49. The helical transmembrane segment at 62-82 threads the bilayer; sequence PSFQDVHAMVFVGFGFLMVFL. Residues 83 to 86 are Cytoplasmic-facing; sequence QRYG. Residues 87-107 form a helical membrane-spanning segment; that stretch reads FSSVGFTFLLAAFALQWSTLV. The Extracellular segment spans residues 108–124; that stretch reads QGFLHSFHGGHIHVGVE. The helical transmembrane segment at 125-145 threads the bilayer; sequence SMINADFCAGAVLISFGAVLG. The Cytoplasmic portion of the chain corresponds to 146 to 149; sequence KTGP. A helical membrane pass occupies residues 150–170; sequence AQLLLMALLEVVLFGINEFVL. Residues 171 to 178 lie on the Extracellular side of the membrane; that stretch reads LHLLGVRD. A helical transmembrane segment spans residues 179–201; that stretch reads AGGSMTIHTFGAYFGLVLSRVLY. Residues 202–219 lie on the Cytoplasmic side of the membrane; the sequence is RPQLEKSKHRQGSVYHSD. Residues 220–240 form a helical membrane-spanning segment; that stretch reads LFTMIGTIFLWIFWPSFNAAL. Over 241–251 the chain is Extracellular; that stretch reads TALGAGQHRTA. The helical transmembrane segment at 252 to 272 threads the bilayer; the sequence is LNTYYSLAASTLGTFALSALV. Residues 273-282 lie on the Cytoplasmic side of the membrane; sequence GEDGRLDMVH. A helical transmembrane segment spans residues 283-303; it reads IQNAALTGGVVVGTSSKMMLT. Position 304 (proline 304) is a topological domain, extracellular. The chain crosses the membrane as a helical span at residues 305–325; sequence FGALAAGFLAGTVSTLGYKFF. At 326 to 346 the chain is on the cytoplasmic side; that stretch reads TPILESKFKVQDTCGVHNLHG. The helical transmembrane segment at 347-367 threads the bilayer; sequence MPGVLGALLGVLVAGLATHEA. At 368-393 the chain is on the extracellular side; it reads YGDGLESVFPLIAEGQRSATSQAMHQ. The helical transmembrane segment at 394-414 threads the bilayer; that stretch reads LFGLFVTLMFASVGGGLGGLL. The Cytoplasmic portion of the chain corresponds to 415–458; the sequence is LKLPFLDSPPDSQCYEDQVHWQVPGEHEDKAQRPLRVEEADTYA. An interaction with ANK3 region spans residues 416 to 424; it reads KLPFLDSPP. A Basolateral sorting signal motif is present at residues 429 to 432; sequence YEDQ. A disordered region spans residues 439 to 458; it reads GEHEDKAQRPLRVEEADTYA.

This sequence belongs to the ammonium transporter (TC 2.A.49) family. Rh subfamily. In terms of assembly, interacts (via C-terminus) with ANK2 and ANK3; required for targeting to the basolateral membrane. Post-translationally, N-glycosylated.

It is found in the cell membrane. It localises to the basolateral cell membrane. The catalysed reaction is NH4(+)(in) = NH4(+)(out). The enzyme catalyses methylamine(out) = methylamine(in). It catalyses the reaction CO2(out) = CO2(in). In terms of biological role, ammonium transporter involved in the maintenance of acid-base homeostasis. Transports ammonium and its related derivative methylammonium across the basolateral plasma membrane of epithelial cells likely contributing to renal transepithelial ammonia transport and ammonia metabolism. May transport either NH4(+) or NH3 ammonia species predominantly mediating an electrogenic NH4(+) transport. May act as a CO2 channel providing for renal acid secretion. This is Ammonium transporter Rh type B (RHBG) from Gorilla gorilla gorilla (Western lowland gorilla).